The primary structure comprises 522 residues: Glutathione reductase, mitochondrial (522 aa).

The N-terminal 43 residues, 1–43 (MALLPRALSSGGRPSWRRAARASRGFPLPLPFPAAATHALSRA), are a transit peptide targeting the mitochondrion. Residues Ser74 and Gly75 each coordinate FAD. Ser74 serves as a coordination point for glutathione. Residue Arg81 coordinates glutathione. An FAD-binding site is contributed by Glu94. Residue Lys97 is modified to N6-acetyllysine. Residues Thr101, Cys102, and Lys110 each coordinate FAD. Cys102 and Cys107 are joined by a disulfide. Residue Tyr158 coordinates glutathione. Ala174 is an FAD binding site. NADP(+) contacts are provided by Ala239, Ile242, Glu245, Arg262, Arg268, and Gly334. Asp375 is a binding site for FAD. Leu381 lines the NADP(+) pocket. Position 383 (Thr383) interacts with FAD. Glutathione is bound at residue Arg391. Residue Val414 participates in NADP(+) binding. His511 provides a ligand contact to FAD. His511 acts as the Proton acceptor in catalysis.

Belongs to the class-I pyridine nucleotide-disulfide oxidoreductase family. Homodimer; disulfide-linked. FAD is required as a cofactor.

It is found in the mitochondrion. The protein localises to the cytoplasm. It catalyses the reaction 2 glutathione + NADP(+) = glutathione disulfide + NADPH + H(+). Functionally, catalyzes the reduction of glutathione disulfide (GSSG) to reduced glutathione (GSH). Constitutes the major mechanism to maintain a high GSH:GSSG ratio in the cytosol. This Callithrix jacchus (White-tufted-ear marmoset) protein is Glutathione reductase, mitochondrial (GSR).